A 198-amino-acid polypeptide reads, in one-letter code: tRNA (pseudouridine(54)-N(1))-methyltransferase (198 aa).

S-adenosyl-L-methionine-binding positions include Leu-130, Gly-153, 176-181 (LSPLEL), and Cys-186.

It belongs to the methyltransferase superfamily. TrmY family. Homodimer.

It is found in the cytoplasm. The catalysed reaction is pseudouridine(54) in tRNA + S-adenosyl-L-methionine = N(1)-methylpseudouridine(54) in tRNA + S-adenosyl-L-homocysteine + H(+). Specifically catalyzes the N1-methylation of pseudouridine at position 54 (Psi54) in tRNAs. The sequence is that of tRNA (pseudouridine(54)-N(1))-methyltransferase from Methanococcus maripaludis (strain C5 / ATCC BAA-1333).